A 123-amino-acid polypeptide reads, in one-letter code: NCLPDWSVYEGYCYKVFKERMNWADAEKFCMKQVKDGHLVSFRNSKEVDFMISLAFPMLKMELVWIGLSDYWRDCYWEWSDGAQLDYKAWDNERHCFAAKTTDNQWMRRKCSGEFYFVCKCPA.

In terms of domain architecture, C-type lectin spans 1–121 (NCLPDWSVYE…SGEFYFVCKC (121 aa)). 3 cysteine pairs are disulfide-bonded: cysteine 2/cysteine 13, cysteine 30/cysteine 119, and cysteine 96/cysteine 111.

It belongs to the snaclec family. In terms of assembly, heterodimer of subunits alpha and beta; disulfide-linked. Forms an active complex with the pentameric immunoglobuline Mkappa (IgMkappa). Expressed by the venom gland.

The protein resides in the secreted. Echicetin itself inhibits aggregation of washed platelets induced by vWF, thrombin or alboaggregin-A. However, when complexed with the pentameric plasma immunoglobulin Mkappa (IgMkappa), echicetin binds specifically to GPIb and activates platelets. This is caused by P-selectin expression and activation of alpha-IIb/beta-3 as well as tyrosine phosphorylation of several signal transduction molecules, including p53/56(LYN), p64, p72(SYK), p70 to p90, and p120. In vivo, it induces thrombocytopenia when injected into mice, probably accounting of activation of platelets rather than inhibition. In Echis carinatus sochureki (Saw-scaled viper), this protein is Snaclec echicetin subunit beta.